Here is a 181-residue protein sequence, read N- to C-terminus: Bifunctional protein PyrR (181 aa).

The PRPP-binding motif lies at 100–112 (VVLVDDVIYTGRT).

The protein belongs to the purine/pyrimidine phosphoribosyltransferase family. PyrR subfamily. As to quaternary structure, homodimer and homohexamer; in equilibrium.

It carries out the reaction UMP + diphosphate = 5-phospho-alpha-D-ribose 1-diphosphate + uracil. In terms of biological role, regulates transcriptional attenuation of the pyrimidine nucleotide (pyr) operon by binding in a uridine-dependent manner to specific sites on pyr mRNA. This disrupts an antiterminator hairpin in the RNA and favors formation of a downstream transcription terminator, leading to a reduced expression of downstream genes. Functionally, also displays a weak uracil phosphoribosyltransferase activity which is not physiologically significant. The protein is Bifunctional protein PyrR of Pelotomaculum thermopropionicum (strain DSM 13744 / JCM 10971 / SI).